The following is a 211-amino-acid chain: Outer-membrane lipoprotein carrier protein (211 aa).

The signal sequence occupies residues 1–25; that stretch reads MRAIRMLLVSALTLGSLSATLSAHA.

Belongs to the LolA family. Monomer.

The protein resides in the periplasm. Its function is as follows. Participates in the translocation of lipoproteins from the inner membrane to the outer membrane. Only forms a complex with a lipoprotein if the residue after the N-terminal Cys is not an aspartate (The Asp acts as a targeting signal to indicate that the lipoprotein should stay in the inner membrane). The chain is Outer-membrane lipoprotein carrier protein from Pseudomonas putida (strain W619).